The following is a 513-amino-acid chain: ABC transporter H family member 2 (513 aa).

Residues 39-280 (LTMKNIHKTY…EHYQKLYKEC (242 aa)) form the ABC transporter domain. An ATP-binding site is contributed by 75 to 82 (GTSGGGKT). The interval 291-471 (VTSVFKNDDD…SSSYSNNNNN (181 aa)) is disordered. Over residues 324–360 (SYNNNNSNLNNNSNSNSNNNSNNNNSKNYASSSSSSS) the composition is skewed to low complexity. Positions 361-386 (VLNGKLSQSTVNNSSIYNHNNDSPFF) are enriched in polar residues. A compositionally biased stretch (low complexity) spans 387 to 471 (NSNNNNNINN…SSSYSNNNNN (85 aa)).

It belongs to the ABC transporter superfamily.

This chain is ABC transporter H family member 2 (abcH2), found in Dictyostelium discoideum (Social amoeba).